The sequence spans 248 residues: 2,3-bisphosphoglycerate-dependent phosphoglycerate mutase (248 aa).

Substrate is bound by residues 8–15 (RHGESAWN), 21–22 (TG), Arg-60, 87–90 (EKHY), Lys-98, 114–115 (RR), and 183–184 (GN). His-9 functions as the Tele-phosphohistidine intermediate in the catalytic mechanism. The active-site Proton donor/acceptor is Glu-87.

This sequence belongs to the phosphoglycerate mutase family. BPG-dependent PGAM subfamily.

It carries out the reaction (2R)-2-phosphoglycerate = (2R)-3-phosphoglycerate. The protein operates within carbohydrate degradation; glycolysis; pyruvate from D-glyceraldehyde 3-phosphate: step 3/5. In terms of biological role, catalyzes the interconversion of 2-phosphoglycerate and 3-phosphoglycerate. The polypeptide is 2,3-bisphosphoglycerate-dependent phosphoglycerate mutase (Bacteroides fragilis (strain ATCC 25285 / DSM 2151 / CCUG 4856 / JCM 11019 / LMG 10263 / NCTC 9343 / Onslow / VPI 2553 / EN-2)).